The chain runs to 370 residues: Glutamate 5-kinase (370 aa).

Position 12 (Lys-12) interacts with ATP. Residues Ser-52, Asp-139, and Asn-151 each coordinate substrate. Residues 171-172 (SD) and 213-219 (TGGMFTK) contribute to the ATP site. The PUA domain occupies 278–356 (QAHIAVDAGA…SDIESILGYS (79 aa)).

The protein belongs to the glutamate 5-kinase family.

Its subcellular location is the cytoplasm. The enzyme catalyses L-glutamate + ATP = L-glutamyl 5-phosphate + ADP. The protein operates within amino-acid biosynthesis; L-proline biosynthesis; L-glutamate 5-semialdehyde from L-glutamate: step 1/2. Its function is as follows. Catalyzes the transfer of a phosphate group to glutamate to form L-glutamate 5-phosphate. This chain is Glutamate 5-kinase, found in Herpetosiphon aurantiacus (strain ATCC 23779 / DSM 785 / 114-95).